The primary structure comprises 356 residues: Heat-inducible transcription repressor HrcA (356 aa).

The protein belongs to the HrcA family.

Functionally, negative regulator of class I heat shock genes (grpE-dnaK-dnaJ and groELS operons). Prevents heat-shock induction of these operons. The sequence is that of Heat-inducible transcription repressor HrcA from Chlorobaculum parvum (strain DSM 263 / NCIMB 8327) (Chlorobium vibrioforme subsp. thiosulfatophilum).